Consider the following 284-residue polypeptide: Efem/EfeO family lipoprotein (284 aa).

The N-terminal stretch at 1-17 is a signal peptide; the sequence is MKKLTTLLLASTLLIAA. Cys-18 carries the N-palmitoyl cysteine lipid modification. Cys-18 carries S-diacylglycerol cysteine lipidation.

It belongs to the EfeM/EfeO family.

It localises to the cell membrane. This is Efem/EfeO family lipoprotein from Staphylococcus aureus (strain NCTC 8325 / PS 47).